Reading from the N-terminus, the 205-residue chain is Putative 3-methyladenine DNA glycosylase (205 aa).

This sequence belongs to the DNA glycosylase MPG family.

In Clostridium acetobutylicum (strain ATCC 824 / DSM 792 / JCM 1419 / IAM 19013 / LMG 5710 / NBRC 13948 / NRRL B-527 / VKM B-1787 / 2291 / W), this protein is Putative 3-methyladenine DNA glycosylase.